The sequence spans 95 residues: Large ribosomal subunit protein uL23 (95 aa).

This sequence belongs to the universal ribosomal protein uL23 family. As to quaternary structure, part of the 50S ribosomal subunit. Contacts protein L29, and trigger factor when it is bound to the ribosome.

In terms of biological role, one of the early assembly proteins it binds 23S rRNA. One of the proteins that surrounds the polypeptide exit tunnel on the outside of the ribosome. Forms the main docking site for trigger factor binding to the ribosome. In Pediococcus pentosaceus (strain ATCC 25745 / CCUG 21536 / LMG 10740 / 183-1w), this protein is Large ribosomal subunit protein uL23.